The sequence spans 951 residues: MDKTYNPQDIEQSLYQGWEEKGYFKPSGQGVPYSIMIPPPNVTGSLHMGHAFQDTIMDTLTRFKRMQGNNTLWQVGTDHAGIATQMLVERKLHAEEGKTRHDLGREDFINKIWEWKKESGGTITKQLRRLGASVDWDRERFTMDDGLSEAVKEVFVRLHKENLIYRGKRLVNWDPKLHTAISDLEVENKDKQGHMWNLRYPLADGVKTQDGKDYIVVATTRPETMLGDSGVAVNPDDERYIDLIGKEILLPIVNRRIKIVADEHADKDKGTGCVKITPAHDFNDNEVGKRHKMPMINIFDKDAAILTQGETYSFDGKELEFDAPIPERLHGLDRFAARKAIVAEFEELGLLEKIEDHGLTVPYGDRSGVVIEPLLTDQWYVRVAPLAEPAKEAVKNGDIQFVPKQYENMYFSWMNDVQDWCISRQLWWGHRIPAWYDSEGNVFVGRDEAEVRRENNIADSVTLSQDEDVLDTWFSSALWTFSTQGWPANTDDLKTFHPSDVLVTGFDIIFFWVARMIMMTLHFIKDENGKPQVPFKTVYVTGLIRDDNGDKMSKSKGNVLDPLDMIDGIELEELVQKRTGNMMQPKLAAKIEKDTRKVFAGGIEAHGTDALRFTLAAMASTGRDINWDMNRLEGYRNFCNKLWNASRYVLMNTEEQDCGFATDAQKELSLADRWILGQFESTVKSYTEHLDNYRFDLAANTLYEFTWHQFCDWYLELTKPVLFKGNEAQQRGTRNTLITVLESLLRLMHPMMPYITETIWQRVAPLAGLETENTSIMVQAFPVYNAASVDAKAMDDLEWVKQFILAIRNIRGEMDISPSKPLSVLLANASSDDVRRIEENNSFLASLAKIEEFTMLENKDDAPACAASYVGNLEIMIPMAGLIDVEAELSRINKQLEKAEKGLAQVQNKLANEKFVNNAPEAVLAKENAKLAEFSDAKTKLLEQKAKIESL.

The 'HIGH' region signature appears at 40–50 (PNVTGSLHMGH). The short motif at 551–555 (KMSKS) is the 'KMSKS' region element. Position 554 (lysine 554) interacts with ATP. Residues 879–950 (MAGLIDVEAE…LLEQKAKIES (72 aa)) adopt a coiled-coil conformation.

This sequence belongs to the class-I aminoacyl-tRNA synthetase family. ValS type 1 subfamily. Monomer.

It localises to the cytoplasm. It carries out the reaction tRNA(Val) + L-valine + ATP = L-valyl-tRNA(Val) + AMP + diphosphate. Its function is as follows. Catalyzes the attachment of valine to tRNA(Val). As ValRS can inadvertently accommodate and process structurally similar amino acids such as threonine, to avoid such errors, it has a 'posttransfer' editing activity that hydrolyzes mischarged Thr-tRNA(Val) in a tRNA-dependent manner. The chain is Valine--tRNA ligase from Pseudoalteromonas translucida (strain TAC 125).